The primary structure comprises 655 residues: Bifunctional lysine-specific demethylase and histidyl-hydroxylase NO66 (655 aa).

Over residues 1–16 the composition is skewed to polar residues; that stretch reads MEKVTNSAAAKPQGNN. 2 disordered regions span residues 1-48 and 67-122; these read MEKV…LSDM and EDTD…QGAS. A compositionally biased stretch (low complexity) spans 76-86; it reads STSSKEAAAAK. The segment covering 87-96 has biased composition (basic and acidic residues); sequence TADHERRLQA. At Ser-131 the chain carries Phosphoserine. Thr-137 is modified (phosphothreonine). Ser-138 is modified (phosphoserine). Residues 185–210 form a disordered region; that stretch reads KAPEEGNNNNDEKEMSTETSEPHKTD. Residues 194–210 show a composition bias toward basic and acidic residues; that stretch reads NDEKEMSTETSEPHKTD. Residues 307-452 enclose the JmjC domain; that stretch reads CSIRLLHASA…NLLETLMPMV (146 aa). His-353, Asp-355, and His-418 together coordinate Fe cation.

This sequence belongs to the ROX family. NO66 subfamily. It depends on Fe(2+) as a cofactor.

It is found in the nucleus. The catalysed reaction is N(6),N(6)-dimethyl-L-lysyl(36)-[histone H3] + 2 2-oxoglutarate + 2 O2 = L-lysyl(36)-[histone H3] + 2 formaldehyde + 2 succinate + 2 CO2. In terms of biological role, oxygenase that can act as both a histone lysine demethylase and a ribosomal histidine hydroxylase. Specifically demethylates 'Lys-4' (H3K4me) and 'Lys-36' (H3K36me) of histone H3, thereby playing a central role in histone code. The sequence is that of Bifunctional lysine-specific demethylase and histidyl-hydroxylase NO66 from Drosophila sechellia (Fruit fly).